The sequence spans 316 residues: Pantothenate kinase (316 aa).

95-102 (GSVAVGKS) serves as a coordination point for ATP.

It belongs to the prokaryotic pantothenate kinase family.

It is found in the cytoplasm. The enzyme catalyses (R)-pantothenate + ATP = (R)-4'-phosphopantothenate + ADP + H(+). The protein operates within cofactor biosynthesis; coenzyme A biosynthesis; CoA from (R)-pantothenate: step 1/5. This is Pantothenate kinase from Shewanella baltica (strain OS195).